The sequence spans 538 residues: Aldehyde dehydrogenase family 2 member B4, mitochondrial (538 aa).

Residues 1–38 (MAARRVSSLLSRSFSASSPLLFRSQGRNCYNGGILRRF) constitute a mitochondrion transit peptide. 282–287 (GSTDTG) is a binding site for NAD(+). The Proton acceptor role is filled by Glu-305. Cys-339 (nucleophile) is an active-site residue.

Belongs to the aldehyde dehydrogenase family. As to quaternary structure, homotetramer.

The protein localises to the mitochondrion matrix. The enzyme catalyses an aldehyde + NAD(+) + H2O = a carboxylate + NADH + 2 H(+). Its function is as follows. Possesses activity on acetaldehyde and glycolaldehyde in vitro. The protein is Aldehyde dehydrogenase family 2 member B4, mitochondrial (ALDH2B4) of Arabidopsis thaliana (Mouse-ear cress).